The following is a 184-amino-acid chain: Ras-related protein Rap-1b (184 aa).

Residue 10 to 18 coordinates GTP; that stretch reads GSGGVGKSA. Positions 25 to 67 are interaction with KRIT1; it reads QGIFVEKYDPTIEDSYRKQVEVDAQQCMLEILDTAGTEQFTAM. An Effector region motif is present at residues 32–40; it reads YDPTIEDSY. Residues 57–61, 116–119, and 147–149 each bind GTP; these read DTAGT, NKCD, and SAK. Serine 179 bears the Phosphoserine; by PKA mark. Position 181 is a cysteine methyl ester (cysteine 181). Cysteine 181 is lipidated: S-geranylgeranyl cysteine. The propeptide at 182 to 184 is removed in mature form; that stretch reads QLL.

Heterodimer with RAP1GAP. Interacts with EPAC2. Interacts with SGSM1. Interacts with SGSM2. Interacts with SGSM3. Interacts with KRIT1. Interacts with RAP1GDS1.

The protein localises to the cell membrane. It is found in the cytoplasm. It localises to the cytosol. Its subcellular location is the cell junction. It catalyses the reaction GTP + H2O = GDP + phosphate + H(+). Activated by guanine nucleotide-exchange factor (GEF) EPAC2 in a cAMP-dependent manner. Functionally, GTP-binding protein that possesses intrinsic GTPase activity. Contributes to the polarizing activity of KRIT1 and CDH5 in the establishment and maintenance of correct endothelial cell polarity and vascular lumen. Required for the localization of phosphorylated PRKCZ, PARD3 and TIAM1 to the cell junction. Plays a role in the establishment of basal endothelial barrier function. This is Ras-related protein Rap-1b (RAP1B) from Bos taurus (Bovine).